Here is a 286-residue protein sequence, read N- to C-terminus: Homoserine kinase (286 aa).

78 to 88 (PLARGLGSSSS) contacts ATP.

This sequence belongs to the GHMP kinase family. Homoserine kinase subfamily.

Its subcellular location is the cytoplasm. The catalysed reaction is L-homoserine + ATP = O-phospho-L-homoserine + ADP + H(+). Its pathway is amino-acid biosynthesis; L-threonine biosynthesis; L-threonine from L-aspartate: step 4/5. Catalyzes the ATP-dependent phosphorylation of L-homoserine to L-homoserine phosphate. This Streptococcus equi subsp. zooepidemicus (strain H70) protein is Homoserine kinase.